A 283-amino-acid chain; its full sequence is Lipoyl synthase (283 aa).

[4Fe-4S] cluster contacts are provided by cysteine 35, cysteine 40, cysteine 46, cysteine 61, cysteine 65, cysteine 68, and serine 273. The region spanning 47–262 is the Radical SAM core domain; it reads FRERQATFLI…RAAALATGFA (216 aa).

It belongs to the radical SAM superfamily. Lipoyl synthase family. The cofactor is [4Fe-4S] cluster.

It localises to the cytoplasm. The enzyme catalyses [[Fe-S] cluster scaffold protein carrying a second [4Fe-4S](2+) cluster] + N(6)-octanoyl-L-lysyl-[protein] + 2 oxidized [2Fe-2S]-[ferredoxin] + 2 S-adenosyl-L-methionine + 4 H(+) = [[Fe-S] cluster scaffold protein] + N(6)-[(R)-dihydrolipoyl]-L-lysyl-[protein] + 4 Fe(3+) + 2 hydrogen sulfide + 2 5'-deoxyadenosine + 2 L-methionine + 2 reduced [2Fe-2S]-[ferredoxin]. It participates in protein modification; protein lipoylation via endogenous pathway; protein N(6)-(lipoyl)lysine from octanoyl-[acyl-carrier-protein]: step 2/2. Functionally, catalyzes the radical-mediated insertion of two sulfur atoms into the C-6 and C-8 positions of the octanoyl moiety bound to the lipoyl domains of lipoate-dependent enzymes, thereby converting the octanoylated domains into lipoylated derivatives. This Geobacter metallireducens (strain ATCC 53774 / DSM 7210 / GS-15) protein is Lipoyl synthase.